A 56-amino-acid chain; its full sequence is Large ribosomal subunit protein bL32 (56 aa).

Positions 1-56 (MAVQQNRKTRSKRGMRRSHDALSAPTLSQDKETGTTHRRHHVAPDGFYRGRKVVDV) are disordered. A compositionally biased stretch (basic residues) spans 7 to 16 (RKTRSKRGMR).

It belongs to the bacterial ribosomal protein bL32 family.

The chain is Large ribosomal subunit protein bL32 from Chromohalobacter salexigens (strain ATCC BAA-138 / DSM 3043 / CIP 106854 / NCIMB 13768 / 1H11).